A 680-amino-acid chain; its full sequence is Translation factor GUF1 homolog, chloroplastic (680 aa).

The N-terminal 51 residues, 1-51 (MATATASRLAVPAPRTSPQAPGRRRPAAPLPSAPPRPRALSAAPRGRVVCP), are a transit peptide targeting the chloroplast. Residues 1–68 (MATATASRLA…ASTTDAGQDR (68 aa)) form a disordered region. Residues 28–37 (APLPSAPPRP) show a composition bias toward pro residues. Low complexity predominate over residues 38-60 (RALSAAPRGRVVCPAAPASSPAS). The tr-type G domain maps to 75–256 (SNIRNFSIIA…AIVTKIPPPQ (182 aa)). GTP is bound by residues 84–91 (AHIDHGKS), 149–153 (DTPGH), and 203–206 (NKID).

The protein belongs to the TRAFAC class translation factor GTPase superfamily. Classic translation factor GTPase family. LepA subfamily.

The protein resides in the plastid. The protein localises to the chloroplast. The catalysed reaction is GTP + H2O = GDP + phosphate + H(+). Promotes chloroplast protein synthesis. May act as a fidelity factor of the translation reaction, by catalyzing a one-codon backward translocation of tRNAs on improperly translocated ribosomes. The protein is Translation factor GUF1 homolog, chloroplastic of Oryza sativa subsp. japonica (Rice).